Consider the following 517-residue polypeptide: ATP synthase subunit alpha (517 aa).

Residue glycine 174 to threonine 181 coordinates ATP.

The protein belongs to the ATPase alpha/beta chains family. In terms of assembly, F-type ATPases have 2 components, CF(1) - the catalytic core - and CF(0) - the membrane proton channel. CF(1) has five subunits: alpha(3), beta(3), gamma(1), delta(1), epsilon(1). CF(0) has three main subunits: a(1), b(2) and c(9-12). The alpha and beta chains form an alternating ring which encloses part of the gamma chain. CF(1) is attached to CF(0) by a central stalk formed by the gamma and epsilon chains, while a peripheral stalk is formed by the delta and b chains.

The protein localises to the cell inner membrane. The catalysed reaction is ATP + H2O + 4 H(+)(in) = ADP + phosphate + 5 H(+)(out). Its function is as follows. Produces ATP from ADP in the presence of a proton gradient across the membrane. The alpha chain is a regulatory subunit. In Polaromonas sp. (strain JS666 / ATCC BAA-500), this protein is ATP synthase subunit alpha.